The sequence spans 263 residues: tRNA (guanine-N(1)-)-methyltransferase (263 aa).

Residues Gly-124 and 144-149 each bind S-adenosyl-L-methionine; that span reads LGDFVL.

This sequence belongs to the RNA methyltransferase TrmD family. In terms of assembly, homodimer.

Its subcellular location is the cytoplasm. The enzyme catalyses guanosine(37) in tRNA + S-adenosyl-L-methionine = N(1)-methylguanosine(37) in tRNA + S-adenosyl-L-homocysteine + H(+). Functionally, specifically methylates guanosine-37 in various tRNAs. The polypeptide is tRNA (guanine-N(1)-)-methyltransferase (Aromatoleum aromaticum (strain DSM 19018 / LMG 30748 / EbN1) (Azoarcus sp. (strain EbN1))).